Reading from the N-terminus, the 243-residue chain is 3-deoxy-manno-octulosonate cytidylyltransferase (243 aa).

Belongs to the KdsB family.

It is found in the cytoplasm. It catalyses the reaction 3-deoxy-alpha-D-manno-oct-2-ulosonate + CTP = CMP-3-deoxy-beta-D-manno-octulosonate + diphosphate. It participates in nucleotide-sugar biosynthesis; CMP-3-deoxy-D-manno-octulosonate biosynthesis; CMP-3-deoxy-D-manno-octulosonate from 3-deoxy-D-manno-octulosonate and CTP: step 1/1. Functionally, activates KDO (a required 8-carbon sugar) for incorporation into bacterial lipopolysaccharide in Gram-negative bacteria. This is 3-deoxy-manno-octulosonate cytidylyltransferase from Wigglesworthia glossinidia brevipalpis.